The following is a 1110-amino-acid chain: ATP-dependent DNA helicase MPH1 (1110 aa).

The segment covering 24–34 (LNEVSDSQTGR) has biased composition (polar residues). 3 disordered regions span residues 24 to 165 (LNEV…TNGK), 178 to 212 (FEEE…PVTN), and 236 to 305 (TETA…PTHH). Composition is skewed to basic and acidic residues over residues 42–57 (NSHE…REIE) and 178–188 (FEEEQSARGDA). Residues 189 to 199 (EMLDDSIEEPG) are compositionally biased toward acidic residues. Polar residues-rich tracts occupy residues 246–273 (ISSQ…QTTL) and 287–300 (QPAT…SRNE). Positions 331–499 (IAHRALFHNL…EVIDGLSISR (169 aa)) constitute a Helicase ATP-binding domain. 344 to 351 (LPTGLGKT) is a binding site for ATP. A DEAH box motif is present at residues 447-450 (DEAH). Residues 675–846 (ILNHFLDAGG…RFTFHTDKSS (172 aa)) form the Helicase C-terminal domain. Disordered stretches follow at residues 867 to 937 (ENSQ…PDLG), 1013 to 1055 (VGDP…RCGT), and 1069 to 1110 (NLAW…DVFE). Over residues 879-890 (RSRAPKRPPKKF) the composition is skewed to basic residues. Composition is skewed to basic and acidic residues over residues 891 to 900 (HMPDGVEKGF), 1041 to 1055 (QSRE…RCGT), and 1077 to 1093 (EAPR…DQKP).

Belongs to the DEAD box helicase family. DEAH subfamily. FANCM sub-subfamily. Interacts with the MHF histone-fold complex to form the FANCM-MHF complex.

The protein resides in the nucleus. It catalyses the reaction ATP + H2O = ADP + phosphate + H(+). In terms of biological role, ATP-dependent DNA helicase involved in DNA damage repair by homologous recombination and in genome maintenance. Capable of unwinding D-loops. Plays a role in limiting crossover recombinants during mitotic DNA double-strand break (DSB) repair. Component of a FANCM-MHF complex which promotes gene conversion at blocked replication forks, probably by reversal of the stalled fork. This chain is ATP-dependent DNA helicase MPH1, found in Coccidioides immitis (strain RS) (Valley fever fungus).